A 440-amino-acid chain; its full sequence is Translation initiation factor eIF2B subunit gamma (440 aa).

The protein belongs to the eIF-2B gamma/epsilon subunits family. Component of the translation initiation factor 2B (eIF2B) complex which is a heterodecamer of two sets of five different subunits: alpha, beta, gamma, delta and epsilon. Subunits alpha, beta and delta comprise a regulatory subcomplex and subunits epsilon and gamma comprise a catalytic subcomplex. Within the complex, the hexameric regulatory complex resides at the center, with the two heterodimeric catalytic subcomplexes bound on opposite sides.

The protein resides in the cytoplasm. The protein localises to the cytosol. Functionally, acts as a component of the translation initiation factor 2B (eIF2B) complex, which catalyzes the exchange of GDP for GTP on the eukaryotic initiation factor 2 (eIF2) complex gamma subunit. Its guanine nucleotide exchange factor activity is repressed when bound to eIF2 complex phosphorylated on the alpha subunit, thereby limiting the amount of methionyl-initiator methionine tRNA available to the ribosome and consequently global translation is repressed. The protein is Translation initiation factor eIF2B subunit gamma (eif2b3) of Dictyostelium discoideum (Social amoeba).